The chain runs to 274 residues: NADPH-dependent 7-cyano-7-deazaguanine reductase (274 aa).

Positions 1-33 (MPKKDALDHLSLGQHTDYPNEYDPKQLQPVPRS) are disordered. Residue 84–86 (IES) coordinates substrate. 86 to 87 (SK) lines the NADPH pocket. Catalysis depends on Cys-183, which acts as the Thioimide intermediate. Asp-190 serves as the catalytic Proton donor. 222-223 (HE) serves as a coordination point for substrate. 250–251 (RG) contacts NADPH.

The protein belongs to the GTP cyclohydrolase I family. QueF type 2 subfamily. In terms of assembly, homodimer.

The protein localises to the cytoplasm. The catalysed reaction is 7-aminomethyl-7-carbaguanine + 2 NADP(+) = 7-cyano-7-deazaguanine + 2 NADPH + 3 H(+). Its pathway is tRNA modification; tRNA-queuosine biosynthesis. Its function is as follows. Catalyzes the NADPH-dependent reduction of 7-cyano-7-deazaguanine (preQ0) to 7-aminomethyl-7-deazaguanine (preQ1). The polypeptide is NADPH-dependent 7-cyano-7-deazaguanine reductase (Idiomarina loihiensis (strain ATCC BAA-735 / DSM 15497 / L2-TR)).